The sequence spans 273 residues: Dermonecrotic toxin SdSicTox-betaIIB1bxi (273 aa).

H4 is an active-site residue. E24 and D26 together coordinate Mg(2+). H40 (nucleophile) is an active-site residue. Cystine bridges form between C44/C50 and C46/C189. Mg(2+) is bound at residue D84.

Belongs to the arthropod phospholipase D family. Class II subfamily. Mg(2+) is required as a cofactor. In terms of tissue distribution, expressed by the venom gland.

The protein localises to the secreted. The enzyme catalyses an N-(acyl)-sphingosylphosphocholine = an N-(acyl)-sphingosyl-1,3-cyclic phosphate + choline. It carries out the reaction an N-(acyl)-sphingosylphosphoethanolamine = an N-(acyl)-sphingosyl-1,3-cyclic phosphate + ethanolamine. It catalyses the reaction a 1-acyl-sn-glycero-3-phosphocholine = a 1-acyl-sn-glycero-2,3-cyclic phosphate + choline. The catalysed reaction is a 1-acyl-sn-glycero-3-phosphoethanolamine = a 1-acyl-sn-glycero-2,3-cyclic phosphate + ethanolamine. Functionally, dermonecrotic toxins cleave the phosphodiester linkage between the phosphate and headgroup of certain phospholipids (sphingolipid and lysolipid substrates), forming an alcohol (often choline) and a cyclic phosphate. This toxin acts on sphingomyelin (SM). It may also act on ceramide phosphoethanolamine (CPE), lysophosphatidylcholine (LPC) and lysophosphatidylethanolamine (LPE), but not on lysophosphatidylserine (LPS), and lysophosphatidylglycerol (LPG). It acts by transphosphatidylation, releasing exclusively cyclic phosphate products as second products. Induces dermonecrosis, hemolysis, increased vascular permeability, edema, inflammatory response, and platelet aggregation. This Sicarius cf. damarensis (strain GJB-2008) (Six-eyed sand spider) protein is Dermonecrotic toxin SdSicTox-betaIIB1bxi.